Consider the following 152-residue polypeptide: MAINRDYLGRAYELPEPYEVTRVKIREFADAISDPNPLYRDPAHAKEAGYTDVIAPPTFPIILSMEGAGQAIADPELALDFSRVVHGDQRFRYSRPLQAGDVVTCRTTITDIKSLAGNEMLTLESEIATTAGEHVVTSVTMLVVRGDAPSGT.

A MaoC-like domain is found at 7–116; sequence YLGRAYELPE…TTITDIKSLA (110 aa).

Belongs to the UPF0336 family.

The protein is UPF0336 protein Tfu_2666 of Thermobifida fusca (strain YX).